A 339-amino-acid polypeptide reads, in one-letter code: Glucokinase (339 aa).

16 to 21 (GDIGGT) is a binding site for ATP.

This sequence belongs to the bacterial glucokinase family.

It localises to the cytoplasm. It carries out the reaction D-glucose + ATP = D-glucose 6-phosphate + ADP + H(+). This is Glucokinase from Pseudomonas paraeruginosa (strain DSM 24068 / PA7) (Pseudomonas aeruginosa (strain PA7)).